Consider the following 429-residue polypeptide: Ribosomal RNA small subunit methyltransferase B (429 aa).

S-adenosyl-L-methionine contacts are provided by residues 254–260 (CAAPGGK), Asp-277, Asp-303, and Asp-322. Catalysis depends on Cys-375, which acts as the Nucleophile.

It belongs to the class I-like SAM-binding methyltransferase superfamily. RsmB/NOP family.

Its subcellular location is the cytoplasm. The enzyme catalyses cytidine(967) in 16S rRNA + S-adenosyl-L-methionine = 5-methylcytidine(967) in 16S rRNA + S-adenosyl-L-homocysteine + H(+). Functionally, specifically methylates the cytosine at position 967 (m5C967) of 16S rRNA. The chain is Ribosomal RNA small subunit methyltransferase B from Salmonella arizonae (strain ATCC BAA-731 / CDC346-86 / RSK2980).